The sequence spans 529 residues: Peptide chain release factor 3 (529 aa).

The 270-residue stretch at S11 to M280 folds into the tr-type G domain. GTP is bound by residues S20–T27, D88–H92, and N142–D145.

The protein belongs to the TRAFAC class translation factor GTPase superfamily. Classic translation factor GTPase family. PrfC subfamily.

The protein resides in the cytoplasm. In terms of biological role, increases the formation of ribosomal termination complexes and stimulates activities of RF-1 and RF-2. It binds guanine nucleotides and has strong preference for UGA stop codons. It may interact directly with the ribosome. The stimulation of RF-1 and RF-2 is significantly reduced by GTP and GDP, but not by GMP. This is Peptide chain release factor 3 from Pectobacterium carotovorum subsp. carotovorum (strain PC1).